The chain runs to 217 residues: Large ribosomal subunit protein uL1 (217 aa).

The protein belongs to the universal ribosomal protein uL1 family. In terms of assembly, part of the 50S ribosomal subunit.

In terms of biological role, binds directly to 23S rRNA. Probably involved in E site tRNA release. Protein L1 is also a translational repressor protein, it controls the translation of its operon by binding to its mRNA. The chain is Large ribosomal subunit protein uL1 from Hyperthermus butylicus (strain DSM 5456 / JCM 9403 / PLM1-5).